A 694-amino-acid polypeptide reads, in one-letter code: Elongation factor G (694 aa).

The 275-residue stretch at 8–282 folds into the tr-type G domain; sequence KDYRNIGIMA…AVIDYLPSPV (275 aa). GTP is bound by residues 17 to 24, 81 to 85, and 135 to 138; these read AHIDAGKT, DTPGH, and NKMD.

It belongs to the TRAFAC class translation factor GTPase superfamily. Classic translation factor GTPase family. EF-G/EF-2 subfamily.

Its subcellular location is the cytoplasm. In terms of biological role, catalyzes the GTP-dependent ribosomal translocation step during translation elongation. During this step, the ribosome changes from the pre-translocational (PRE) to the post-translocational (POST) state as the newly formed A-site-bound peptidyl-tRNA and P-site-bound deacylated tRNA move to the P and E sites, respectively. Catalyzes the coordinated movement of the two tRNA molecules, the mRNA and conformational changes in the ribosome. The protein is Elongation factor G of Mesomycoplasma hyopneumoniae (strain J / ATCC 25934 / NCTC 10110) (Mycoplasma hyopneumoniae).